The primary structure comprises 872 residues: Paladin (872 aa).

Residues M1 to L37 form a disordered region. A lipid anchor (N-myristoyl glycine) is attached at G2. A coiled-coil region spans residues R186–A210.

This sequence belongs to the paladin family.

It localises to the cytoplasm. Its subcellular location is the cytosol. This is Paladin (pald1) from Xenopus tropicalis (Western clawed frog).